Consider the following 570-residue polypeptide: Vacuolar protein sorting-associated protein 45 (570 aa).

A phosphoserine mark is found at Ser307 and Ser441.

This sequence belongs to the STXBP/unc-18/SEC1 family. As to quaternary structure, interacts with STX6 and ZFYVE20. As to expression, ubiquitous; expression was highest in testis and in brain. Detected in every part of the brain.

It localises to the golgi apparatus membrane. The protein resides in the endosome membrane. In terms of biological role, may play a role in vesicle-mediated protein trafficking from the Golgi stack through the trans-Golgi network. In Rattus norvegicus (Rat), this protein is Vacuolar protein sorting-associated protein 45 (Vps45).